The chain runs to 485 residues: Probable carboxypeptidase S-like 1 (485 aa).

An N-terminal signal peptide occupies residues 1-21; sequence MIFKFFFIFFLIILVIKISES. H111 contacts Zn(2+). The active site involves D113. Zn(2+) is bound at residue D142. E177 functions as the Proton acceptor in the catalytic mechanism. Residues E178, D204, and H431 each coordinate Zn(2+).

It belongs to the peptidase M20A family. Zn(2+) serves as cofactor.

It localises to the secreted. This Dictyostelium discoideum (Social amoeba) protein is Probable carboxypeptidase S-like 1.